A 420-amino-acid chain; its full sequence is ATP phosphoribosyltransferase regulatory subunit (420 aa).

It belongs to the class-II aminoacyl-tRNA synthetase family. HisZ subfamily. In terms of assembly, heteromultimer composed of HisG and HisZ subunits.

It is found in the cytoplasm. It functions in the pathway amino-acid biosynthesis; L-histidine biosynthesis; L-histidine from 5-phospho-alpha-D-ribose 1-diphosphate: step 1/9. Functionally, required for the first step of histidine biosynthesis. May allow the feedback regulation of ATP phosphoribosyltransferase activity by histidine. This chain is ATP phosphoribosyltransferase regulatory subunit, found in Bacillus anthracis (strain A0248).